The following is a 155-amino-acid chain: Transcriptional repressor NrdR (155 aa).

Residues 1 to 24 (MRCPYCGHEDSQVKDSRPTEDGAA) are disordered. The segment at 3-34 (CPYCGHEDSQVKDSRPTEDGAAIRRRRQCEDC) is a zinc-finger region. Basic and acidic residues predominate over residues 7–24 (GHEDSQVKDSRPTEDGAA). In terms of domain architecture, ATP-cone spans 49 to 139 (VVVIKAGGTR…VYRDFTEARD (91 aa)).

Belongs to the NrdR family. Requires Zn(2+) as cofactor.

In terms of biological role, negatively regulates transcription of bacterial ribonucleotide reductase nrd genes and operons by binding to NrdR-boxes. This is Transcriptional repressor NrdR from Sphingopyxis alaskensis (strain DSM 13593 / LMG 18877 / RB2256) (Sphingomonas alaskensis).